The primary structure comprises 177 residues: MEAGKISTRYARAIYEYALEQGNETILYKGMQSLAKHFAMYPVLKKSINDPTLSDENKIKLLIAACRIDSNKTLKQAIKVIVKNGRAYYIERIARMYEKEYRQSKGLVLAQLTTVGLTTNNEAKKLLIKFLSNKTNGQIEFKTILNLDIIGGFILEIEDLLLDASVKRQLNQIKCQI.

The protein belongs to the ATPase delta chain family. As to quaternary structure, F-type ATPases have 2 components, F(1) - the catalytic core - and F(0) - the membrane proton channel. F(1) has five subunits: alpha(3), beta(3), gamma(1), delta(1), epsilon(1). F(0) has three main subunits: a(1), b(2) and c(10-14). The alpha and beta chains form an alternating ring which encloses part of the gamma chain. F(1) is attached to F(0) by a central stalk formed by the gamma and epsilon chains, while a peripheral stalk is formed by the delta and b chains.

It is found in the cell inner membrane. In terms of biological role, f(1)F(0) ATP synthase produces ATP from ADP in the presence of a proton or sodium gradient. F-type ATPases consist of two structural domains, F(1) containing the extramembraneous catalytic core and F(0) containing the membrane proton channel, linked together by a central stalk and a peripheral stalk. During catalysis, ATP synthesis in the catalytic domain of F(1) is coupled via a rotary mechanism of the central stalk subunits to proton translocation. This protein is part of the stalk that links CF(0) to CF(1). It either transmits conformational changes from CF(0) to CF(1) or is implicated in proton conduction. This Azobacteroides pseudotrichonymphae genomovar. CFP2 protein is ATP synthase subunit delta.